Reading from the N-terminus, the 446-residue chain is N-succinylarginine dihydrolase (446 aa).

Residues 21 to 30 (AGLSWGNVAS), N112, and 139 to 140 (HR) each bind substrate. The active site involves E176. Residue R216 participates in substrate binding. The active site involves H252. Substrate-binding residues include D254 and N364. The Nucleophile role is filled by C370.

This sequence belongs to the succinylarginine dihydrolase family. As to quaternary structure, homodimer.

The catalysed reaction is N(2)-succinyl-L-arginine + 2 H2O + 2 H(+) = N(2)-succinyl-L-ornithine + 2 NH4(+) + CO2. Its pathway is amino-acid degradation; L-arginine degradation via AST pathway; L-glutamate and succinate from L-arginine: step 2/5. Its function is as follows. Catalyzes the hydrolysis of N(2)-succinylarginine into N(2)-succinylornithine, ammonia and CO(2). This is N-succinylarginine dihydrolase from Marinobacter nauticus (strain ATCC 700491 / DSM 11845 / VT8) (Marinobacter aquaeolei).